The following is a 185-amino-acid chain: Peptide deformylase (185 aa).

2 residues coordinate Fe cation: cysteine 109 and histidine 152. Glutamate 153 is an active-site residue. Histidine 156 lines the Fe cation pocket.

It belongs to the polypeptide deformylase family. Fe(2+) serves as cofactor.

The catalysed reaction is N-terminal N-formyl-L-methionyl-[peptide] + H2O = N-terminal L-methionyl-[peptide] + formate. Its function is as follows. Removes the formyl group from the N-terminal Met of newly synthesized proteins. Requires at least a dipeptide for an efficient rate of reaction. N-terminal L-methionine is a prerequisite for activity but the enzyme has broad specificity at other positions. In Roseiflexus castenholzii (strain DSM 13941 / HLO8), this protein is Peptide deformylase.